Here is a 366-residue protein sequence, read N- to C-terminus: tRNA/tmRNA (uracil-C(5))-methyltransferase (366 aa).

Residues Q190, Y218, N223, E239, and D299 each contribute to the S-adenosyl-L-methionine site. Catalysis depends on C324, which acts as the Nucleophile. Catalysis depends on E358, which acts as the Proton acceptor.

It belongs to the class I-like SAM-binding methyltransferase superfamily. RNA M5U methyltransferase family. TrmA subfamily.

The enzyme catalyses uridine(54) in tRNA + S-adenosyl-L-methionine = 5-methyluridine(54) in tRNA + S-adenosyl-L-homocysteine + H(+). It carries out the reaction uridine(341) in tmRNA + S-adenosyl-L-methionine = 5-methyluridine(341) in tmRNA + S-adenosyl-L-homocysteine + H(+). Functionally, dual-specificity methyltransferase that catalyzes the formation of 5-methyluridine at position 54 (m5U54) in all tRNAs, and that of position 341 (m5U341) in tmRNA (transfer-mRNA). The polypeptide is tRNA/tmRNA (uracil-C(5))-methyltransferase (Escherichia coli O157:H7 (strain EC4115 / EHEC)).